Here is a 457-residue protein sequence, read N- to C-terminus: Chromosomal replication initiator protein DnaA (457 aa).

Residues 1–73 (MANNYQTLYD…SKYLSEEFKK (73 aa)) are domain I, interacts with DnaA modulators. The interval 73-108 (KENIVNFEFIIDNEKLLINSNFLIKETNIKNRFNFS) is domain II. The interval 109-331 (DELLRYNFNN…GNLKQICFWA (223 aa)) is domain III, AAA+ region. ATP contacts are provided by Gly-156, Gly-158, Lys-159, and Thr-160. The interval 332-457 (DNDTNKDLII…LQINLIINKF (126 aa)) is domain IV, binds dsDNA.

It belongs to the DnaA family. As to quaternary structure, oligomerizes as a right-handed, spiral filament on DNA at oriC.

Its subcellular location is the cytoplasm. Its function is as follows. Plays an essential role in the initiation and regulation of chromosomal replication. ATP-DnaA binds to the origin of replication (oriC) to initiate formation of the DNA replication initiation complex once per cell cycle. Binds the DnaA box (a 9 base pair repeat at the origin) and separates the double-stranded (ds)DNA. Forms a right-handed helical filament on oriC DNA; dsDNA binds to the exterior of the filament while single-stranded (ss)DNA is stabiized in the filament's interior. The ATP-DnaA-oriC complex binds and stabilizes one strand of the AT-rich DNA unwinding element (DUE), permitting loading of DNA polymerase. After initiation quickly degrades to an ADP-DnaA complex that is not apt for DNA replication. Binds acidic phospholipids. This chain is Chromosomal replication initiator protein DnaA, found in Ureaplasma parvum serovar 3 (strain ATCC 700970).